The primary structure comprises 156 residues: MGLEKSLVFFPLLVLLALGWVQPCLGRESSAHKFRRQHMDSEGLSSSSSSPTYCNQMMQRRKLTRGHCKPVNTFVHEPLADVQAVCFQENVTCKNGQTNCYRSGSSMHVTDCRTTGSSKYPNCAYRTTQKVKRIVVACEGDPSVPVHYDGSVEDST.

The N-terminal stretch at 1–26 (MGLEKSLVFFPLLVLLALGWVQPCLG) is a signal peptide. Positions 33 and 36 each coordinate substrate. Histidine 38 acts as the Proton acceptor in catalysis. Disulfide bonds link cysteine 54/cysteine 112, cysteine 68/cysteine 123, cysteine 86/cysteine 138, and cysteine 93/cysteine 100. 69–73 (KPVNT) contacts substrate. The N-linked (GlcNAc...) asparagine glycan is linked to asparagine 90. Substrate contacts are provided by lysine 94 and arginine 113. The active-site Proton donor is the histidine 147.

This sequence belongs to the pancreatic ribonuclease family. Monomer. Interacts with and forms tight 1:1 complexes with RNH1. Dimerization of two such complexes may occur. Interaction with RNH1 inhibits this protein. Pancreas.

It is found in the secreted. The catalysed reaction is an [RNA] containing cytidine + H2O = an [RNA]-3'-cytidine-3'-phosphate + a 5'-hydroxy-ribonucleotide-3'-[RNA].. The enzyme catalyses an [RNA] containing uridine + H2O = an [RNA]-3'-uridine-3'-phosphate + a 5'-hydroxy-ribonucleotide-3'-[RNA].. Endonuclease that catalyzes the cleavage of RNA on the 3' side of pyrimidine nucleotides. Acts on single-stranded and double-stranded RNA. This Glis glis (Fat dormouse) protein is Ribonuclease pancreatic (RNASE1).